Reading from the N-terminus, the 128-residue chain is Cytochrome c-type biogenesis protein CcmE (128 aa).

The Cytoplasmic segment spans residues 1–8 (MQKRVRNR). A helical; Signal-anchor for type II membrane protein membrane pass occupies residues 9 to 29 (LITIIICFCSAFLGIGIILYN). The Periplasmic portion of the chain corresponds to 30-128 (LENNIVFFLP…KHDENYRPTR (99 aa)). His120 and Tyr124 together coordinate heme.

Belongs to the CcmE/CycJ family.

Its subcellular location is the cell inner membrane. Functionally, heme chaperone required for the biogenesis of c-type cytochromes. Transiently binds heme delivered by CcmC and transfers the heme to apo-cytochromes in a process facilitated by CcmF and CcmH. This is Cytochrome c-type biogenesis protein CcmE from Rickettsia canadensis (strain McKiel).